We begin with the raw amino-acid sequence, 275 residues long: MICKNSIRHKELTLIIFLCFIYLSKTFVEVKAPPYVLVPEGSDINLTCFIKDDQGAGEDKVIVAWQQGDGEVTQGIKTTWDTTRQVGQTMLHISKVSKEAEGSYMCVVWINGDADYKKMNLGVFTVSKKTYMHNEVSITPRRSRVDMSDGRPLKIECAFSTRRIYGRSQVNIKWWKIDGITRKWEQQTSGVNLLLHTYGGIGSLSIPNPTTGESTGKYMCVVTCGDIGNVGFRLVKSLSPLSDTESDHSYTSEEGSHFMERCKVKKSPYGGWIVE.

2 Ig-like V-type domains span residues 25–122 (KTFV…MNLG) and 140–239 (PRRS…KSLS).

This chain is Putative Ig-like V-type domain-containing protein FPV055, found in Fowlpox virus (strain NVSL) (FPV).